Here is a 237-residue protein sequence, read N- to C-terminus: Mannose-specific lectin alpha chain (237 aa).

The Mn(2+) site is built by E8 and D10. Positions 10, 12, 14, and 19 each coordinate Ca(2+). A carbohydrate is bound at residue Y12. Mn(2+) contacts are provided by D19, H24, and S34. Residue 99–100 (LY) coordinates a carbohydrate. Position 208 (D208) interacts with Ca(2+). Position 228 (R228) interacts with a carbohydrate.

This sequence belongs to the leguminous lectin family. In terms of assembly, homotetramer. Post-translationally, the beta and gamma chains are produced by partial proteolytic processing of the lectin alpha chain by an asparaginyl endopeptidase.

In terms of biological role, D-mannose/D-glucose-binding lectin. Also binds derivatives of glucose and mannose such as more complex glycans. The protein is Mannose-specific lectin alpha chain of Cymbosema roseum (Dioclea purpurea).